The primary structure comprises 315 residues: Probable cell division protein WhiA (315 aa).

The segment at residues Ser280–Thr313 is a DNA-binding region (H-T-H motif).

This sequence belongs to the WhiA family.

Functionally, involved in cell division and chromosome segregation. The chain is Probable cell division protein WhiA from Clostridium beijerinckii (strain ATCC 51743 / NCIMB 8052) (Clostridium acetobutylicum).